Here is a 362-residue protein sequence, read N- to C-terminus: C-C chemokine receptor type 10 (362 aa).

The Extracellular segment spans residues 1–52; that stretch reads MGTEATEQVSWGHYSGDEEDAYSAEPLPELCYKADVQAFSRAFQPSVSLTVA. Residues 53-68 form a helical membrane-spanning segment; sequence ALGLAGNGLVLATHLA. Over 69–78 the chain is Cytoplasmic; the sequence is ARRAARSPTS. The helical transmembrane segment at 79 to 99 threads the bilayer; that stretch reads AHLLQLALADLLLALTLPFAA. The Extracellular segment spans residues 100–114; the sequence is AGALQGWSLGSATCR. A disulfide bridge links cysteine 113 with cysteine 191. The helical transmembrane segment at 115–136 threads the bilayer; it reads TISGLYSASFHAGFLFLACISA. Over 137–159 the chain is Cytoplasmic; it reads DRYVAIARALPAGPRPSTPGRAH. A helical membrane pass occupies residues 160-179; the sequence is LVSVIVWLLSLLLALPALLF. At 180 to 203 the chain is on the extracellular side; the sequence is SQDGQREGQRRCRLIFPEGLTQTV. Residues 204–225 form a helical membrane-spanning segment; sequence KGASAVAQVALGFALPLGVMVA. Over 226-247 the chain is Cytoplasmic; that stretch reads CYALLGRTLLAARGPERRRALR. Residues 248–269 form a helical membrane-spanning segment; it reads VVVALVAAFVVLQLPYSLALLL. Over 270-290 the chain is Extracellular; the sequence is DTADLLAARERSCPASKRKDV. The chain crosses the membrane as a helical span at residues 291-313; sequence ALLVTSGLALARCGLNPVLYAFL. At 314–362 the chain is on the cytoplasmic side; sequence GLRFRQDLRRLLRGGSCPSGPQPRRGCPRRPRLSSCSAPTETHSLSWDN. Residues 328-338 show a composition bias toward low complexity; that stretch reads GSCPSGPQPRR. A disordered region spans residues 328–362; that stretch reads GSCPSGPQPRRGCPRRPRLSSCSAPTETHSLSWDN. The span at 351–362 shows a compositional bias: polar residues; that stretch reads APTETHSLSWDN.

It belongs to the G-protein coupled receptor 1 family. Expressed at high levels in adult testis, small intestine, fetal lung, fetal kidney. Weaker expression was observed in many other adult tissues including spleen, thymus, lymph node, Peyer patches, colon, heart, ovary, peripheral blood lymphocytes, thyroid and spinal cord. Also expressed by melanocytes, dermal fibroblasts, dermal microvascular endothelial cells. Also detected in T-cells and in skin-derived Langerhans cells.

It is found in the cell membrane. Receptor for chemokines SCYA27 and SCYA28. Subsequently transduces a signal by increasing the intracellular calcium ions level and stimulates chemotaxis in a pre-B cell line. The sequence is that of C-C chemokine receptor type 10 (CCR10) from Homo sapiens (Human).